We begin with the raw amino-acid sequence, 932 residues long: 2-oxoglutarate dehydrogenase E1 component (932 aa).

The protein belongs to the alpha-ketoglutarate dehydrogenase family. In terms of assembly, homodimer. Part of the 2-oxoglutarate dehydrogenase (OGDH) complex composed of E1 (2-oxoglutarate dehydrogenase), E2 (dihydrolipoamide succinyltransferase) and E3 (dihydrolipoamide dehydrogenase); the complex contains multiple copies of the three enzymatic components (E1, E2 and E3). Requires thiamine diphosphate as cofactor.

The enzyme catalyses N(6)-[(R)-lipoyl]-L-lysyl-[protein] + 2-oxoglutarate + H(+) = N(6)-[(R)-S(8)-succinyldihydrolipoyl]-L-lysyl-[protein] + CO2. Its function is as follows. E1 component of the 2-oxoglutarate dehydrogenase (OGDH) complex which catalyzes the decarboxylation of 2-oxoglutarate, the first step in the conversion of 2-oxoglutarate to succinyl-CoA and CO(2). The polypeptide is 2-oxoglutarate dehydrogenase E1 component (Staphylococcus aureus (strain JH9)).